Consider the following 454-residue polypeptide: Bifunctional protein GlmU (454 aa).

Residues 1–225 (MNIVILAAGM…LWETLGVNSK (225 aa)) form a pyrophosphorylase region. Residues 6–9 (LAAG), K20, Q71, 76–77 (GT), 98–100 (YGD), G135, E150, N165, and N223 each bind UDP-N-acetyl-alpha-D-glucosamine. Position 100 (D100) interacts with Mg(2+). Residue N223 coordinates Mg(2+). Residues 226 to 246 (VQLAEVERIHQRNLAQRLLET) form a linker region. The interval 247–454 (GVTLADPARI…WQRPVKKAKQ (208 aa)) is N-acetyltransferase. 2 residues coordinate UDP-N-acetyl-alpha-D-glucosamine: R329 and K347. H359 serves as the catalytic Proton acceptor. UDP-N-acetyl-alpha-D-glucosamine-binding residues include Y362 and N373. Acetyl-CoA contacts are provided by residues A376, 382–383 (NY), S401, A419, and R436.

The protein in the N-terminal section; belongs to the N-acetylglucosamine-1-phosphate uridyltransferase family. It in the C-terminal section; belongs to the transferase hexapeptide repeat family. In terms of assembly, homotrimer. Requires Mg(2+) as cofactor.

The protein resides in the cytoplasm. It carries out the reaction alpha-D-glucosamine 1-phosphate + acetyl-CoA = N-acetyl-alpha-D-glucosamine 1-phosphate + CoA + H(+). It catalyses the reaction N-acetyl-alpha-D-glucosamine 1-phosphate + UTP + H(+) = UDP-N-acetyl-alpha-D-glucosamine + diphosphate. It participates in nucleotide-sugar biosynthesis; UDP-N-acetyl-alpha-D-glucosamine biosynthesis; N-acetyl-alpha-D-glucosamine 1-phosphate from alpha-D-glucosamine 6-phosphate (route II): step 2/2. The protein operates within nucleotide-sugar biosynthesis; UDP-N-acetyl-alpha-D-glucosamine biosynthesis; UDP-N-acetyl-alpha-D-glucosamine from N-acetyl-alpha-D-glucosamine 1-phosphate: step 1/1. It functions in the pathway bacterial outer membrane biogenesis; LPS lipid A biosynthesis. Catalyzes the last two sequential reactions in the de novo biosynthetic pathway for UDP-N-acetylglucosamine (UDP-GlcNAc). The C-terminal domain catalyzes the transfer of acetyl group from acetyl coenzyme A to glucosamine-1-phosphate (GlcN-1-P) to produce N-acetylglucosamine-1-phosphate (GlcNAc-1-P), which is converted into UDP-GlcNAc by the transfer of uridine 5-monophosphate (from uridine 5-triphosphate), a reaction catalyzed by the N-terminal domain. In Cupriavidus pinatubonensis (strain JMP 134 / LMG 1197) (Cupriavidus necator (strain JMP 134)), this protein is Bifunctional protein GlmU.